A 451-amino-acid chain; its full sequence is NADH-quinone oxidoreductase subunit D (451 aa).

Belongs to the complex I 49 kDa subunit family. NDH-1 is composed of 14 different subunits. Subunits NuoB, C, D, E, F, and G constitute the peripheral sector of the complex.

The protein resides in the cell membrane. It catalyses the reaction a quinone + NADH + 5 H(+)(in) = a quinol + NAD(+) + 4 H(+)(out). Functionally, NDH-1 shuttles electrons from NADH, via FMN and iron-sulfur (Fe-S) centers, to quinones in the respiratory chain. The immediate electron acceptor for the enzyme in this species is believed to be a menaquinone. Couples the redox reaction to proton translocation (for every two electrons transferred, four hydrogen ions are translocated across the cytoplasmic membrane), and thus conserves the redox energy in a proton gradient. The chain is NADH-quinone oxidoreductase subunit D from Mycolicibacterium gilvum (strain PYR-GCK) (Mycobacterium gilvum (strain PYR-GCK)).